Consider the following 382-residue polypeptide: MYRVLIVFFLFVFLYIVYQPFYQAYLHIGHAQQDYNDTLDDRMDYIESVMRRRHYVPIEALPAIRFDTNLGTLAGDTIKCMSVPLFVSDIDLPMFDCSQICDNPSAAYFFVNETDVFVVNGHRLTVGGYCSTNSLPRNCNRETSVILMSLNQWTCIAEDPRYYAGTDNMTQLAGRQHFDRIMPGQSDRNVLFDRLLGREVNVTTNTFRRSWDELLEDGTRRFEMRCNARDNNNNLMFVNPLNPLECLPNVCTNVSNVHTSVRPVFETGECDCGDEAVTRVTHIVPGDRTSMCASIIDGLDKSTASYRYRVECVNLYTSILNYSNNKLLCPSDTFDSNTDAAFAFEVPGSYPLSRNGINEPTYRFYLDTRSRVNYNDVRGQLS.

As to quaternary structure, forms the PIF complex together with PIF1 and PIF3. The complex also interacts with per os infectivity factor PIF0.

In terms of biological role, per os infectivity factor that mediates the specific binding of occluded virions (ODV) to the host midgut target cells. In Autographa californica nuclear polyhedrosis virus (AcMNPV), this protein is Per os infectivity factor 2.